A 304-amino-acid chain; its full sequence is HTH-type transcriptional regulator BenM (304 aa).

The HTH lysR-type domain occupies 1 to 58 (MELRHLRYFVAVVEEQSFTKAADKLCIAQPPLSRQIQNLEEELGIQLLERGSRPVKTT). The segment at residues 18 to 37 (FTKAADKLCIAQPPLSRQIQ) is a DNA-binding region (H-T-H motif). The benzoate site is built by Ser-99 and Leu-104. A cis,cis-muconate-binding site is contributed by Ser-99. Residue Thr-128 participates in cis,cis-muconate binding. Benzoate-binding residues include Phe-144, Arg-160, and Asn-202. Phe-203 contributes to the cis,cis-muconate binding site. Tyr-293 contributes to the benzoate binding site.

It belongs to the LysR transcriptional regulatory family. As to quaternary structure, homotetramer; dimer of dimers. The dimers can also associate to form linear, higher oligomers (in vitro).

Positive regulator of the ben and cat genes for benzoate degradation. BenM is necessary for ben gene expression but not for expression of the cat genes, which can be regulated by CatM. Binds to the inducers cis,cis-muconate and benzoate. The chain is HTH-type transcriptional regulator BenM (benM) from Acinetobacter baylyi (strain ATCC 33305 / BD413 / ADP1).